A 314-amino-acid polypeptide reads, in one-letter code: Dihydroorotate dehydrogenase (fumarate) (314 aa).

Substrate-binding positions include Lys-46, Asn-70–Leu-74, and Asn-130. Lys-46–Ser-47 contributes to the FMN binding site. Asn-130 serves as a coordination point for FMN. Residues Ser-132 and Cys-133 each act as nucleophile in the active site. FMN contacts are provided by Lys-167 and Ile-195. Asn-196–Ser-197 contacts substrate. FMN-binding positions include Gly-224, Gly-252–Gly-253, and Gly-274–Thr-275.

The protein belongs to the dihydroorotate dehydrogenase family. Type 1 subfamily. In terms of assembly, homodimer. It depends on FMN as a cofactor.

The protein resides in the cytoplasm. It catalyses the reaction (S)-dihydroorotate + fumarate = orotate + succinate. It participates in pyrimidine metabolism; UMP biosynthesis via de novo pathway. Its activity is regulated as follows. The activity is independent of the presence of oxygen. In terms of biological role, catalyzes the conversion of dihydroorotate to orotate with fumarate as the electron acceptor. The polypeptide is Dihydroorotate dehydrogenase (fumarate) (URA1) (Lachancea kluyveri (strain ATCC 58438 / CBS 3082 / BCRC 21498 / NBRC 1685 / JCM 7257 / NCYC 543 / NRRL Y-12651) (Yeast)).